The chain runs to 280 residues: Shikimate dehydrogenase (NADP(+)) (280 aa).

Shikimate contacts are provided by residues 20-22 (SLS) and Thr67. The active-site Proton acceptor is Lys71. Shikimate-binding residues include Asn92 and Asp107. NADP(+) is bound by residues 131–135 (GAGGA) and Gly220. Tyr222 is a shikimate binding site. Gly243 lines the NADP(+) pocket.

It belongs to the shikimate dehydrogenase family. As to quaternary structure, homodimer.

It catalyses the reaction shikimate + NADP(+) = 3-dehydroshikimate + NADPH + H(+). It functions in the pathway metabolic intermediate biosynthesis; chorismate biosynthesis; chorismate from D-erythrose 4-phosphate and phosphoenolpyruvate: step 4/7. In terms of biological role, involved in the biosynthesis of the chorismate, which leads to the biosynthesis of aromatic amino acids. Catalyzes the reversible NADPH linked reduction of 3-dehydroshikimate (DHSA) to yield shikimate (SA). This Maricaulis maris (strain MCS10) (Caulobacter maris) protein is Shikimate dehydrogenase (NADP(+)).